We begin with the raw amino-acid sequence, 821 residues long: Phenylalanine--tRNA ligase beta subunit (821 aa).

In terms of domain architecture, tRNA-binding spans 39–149 (RTWAEGVVVG…DAVTVGEDVR (111 aa)). Residues 409-503 (PLERTLTLRL…RLYGYDRFEE (95 aa)) form the B5 domain. 4 residues coordinate Mg(2+): aspartate 481, aspartate 487, glutamate 490, and glutamate 491. The 97-residue stretch at 724–820 (STYPASDRDL…LVEKYAVTLR (97 aa)) folds into the FDX-ACB domain.

This sequence belongs to the phenylalanyl-tRNA synthetase beta subunit family. Type 1 subfamily. Tetramer of two alpha and two beta subunits. Mg(2+) is required as a cofactor.

It is found in the cytoplasm. The catalysed reaction is tRNA(Phe) + L-phenylalanine + ATP = L-phenylalanyl-tRNA(Phe) + AMP + diphosphate + H(+). In Thermosynechococcus vestitus (strain NIES-2133 / IAM M-273 / BP-1), this protein is Phenylalanine--tRNA ligase beta subunit.